The following is a 1284-amino-acid chain: Peroxisomal ATPase PEX1 (1284 aa).

A disordered region spans residues 339–373 (SPKQQQDKSKQGVLLPDKEKQLSKSPDHKQISSNR). Basic and acidic residues predominate over residues 343–373 (QQDKSKQGVLLPDKEKQLSKSPDHKQISSNR). ATP is bound by residues 600 to 607 (GGKGSGKS) and 882 to 889 (GPPGTGKT). A phosphoserine mark is found at serine 1182, serine 1210, and serine 1212. The segment at 1261 to 1284 (FQNPKKRKNQSGTVFRTGQKVTLA) is disordered. Polar residues predominate over residues 1270–1284 (QSGTVFRTGQKVTLA).

This sequence belongs to the AAA ATPase family. In terms of assembly, homooligomer; homooligomerizes in the cytosol, interaction with PEX6 promotes dissociation of the homooligomer. Interacts with PEX6; forming the PEX1-PEX6 AAA ATPase complex, which is composed of a heterohexamer formed by a trimer of PEX1-PEX6 dimers. Interacts indirectly with PEX26, via its interaction with PEX6.

It is found in the cytoplasm. The protein resides in the cytosol. It localises to the peroxisome membrane. It catalyses the reaction ATP + H2O = ADP + phosphate + H(+). In terms of biological role, component of the PEX1-PEX6 AAA ATPase complex, a protein dislocase complex that mediates the ATP-dependent extraction of the PEX5 receptor from peroxisomal membranes, an essential step for PEX5 recycling. Specifically recognizes PEX5 monoubiquitinated at 'Cys-11', and pulls it out of the peroxisome lumen through the PEX2-PEX10-PEX12 retrotranslocation channel. Extraction by the PEX1-PEX6 AAA ATPase complex is accompanied by unfolding of the TPR repeats and release of bound cargo from PEX5. The chain is Peroxisomal ATPase PEX1 from Mus musculus (Mouse).